We begin with the raw amino-acid sequence, 437 residues long: tRNA modification GTPase MnmE (437 aa).

Positions 21, 80, and 120 each coordinate (6S)-5-formyl-5,6,7,8-tetrahydrofolate. Residues 218–361 form the TrmE-type G domain; it reads GFVVVLAGPP…LLDRVAAAAG (144 aa). Asparagine 228 lines the K(+) pocket. GTP is bound by residues 228-233, 247-253, and 272-275; these read NAGKST, SPIPGTT, and DTAG. A Mg(2+)-binding site is contributed by serine 232. Serine 247, isoleucine 249, and threonine 252 together coordinate K(+). Threonine 253 contacts Mg(2+). Lysine 437 contributes to the (6S)-5-formyl-5,6,7,8-tetrahydrofolate binding site.

Belongs to the TRAFAC class TrmE-Era-EngA-EngB-Septin-like GTPase superfamily. TrmE GTPase family. As to quaternary structure, homodimer. Heterotetramer of two MnmE and two MnmG subunits. K(+) is required as a cofactor.

The protein resides in the cytoplasm. Its function is as follows. Exhibits a very high intrinsic GTPase hydrolysis rate. Involved in the addition of a carboxymethylaminomethyl (cmnm) group at the wobble position (U34) of certain tRNAs, forming tRNA-cmnm(5)s(2)U34. This Methylobacterium sp. (strain 4-46) protein is tRNA modification GTPase MnmE.